The chain runs to 180 residues: NADH-quinone oxidoreductase subunit I (180 aa).

4Fe-4S ferredoxin-type domains are found at residues 50 to 80 (LTRDPDGEERCVACNLCAVACPVGCISLQKA) and 90 to 119 (EFFRINFSRCIFCGLCEEACPTTAIQLTPD). Residues C60, C63, C66, C70, C99, C102, C105, and C109 each coordinate [4Fe-4S] cluster.

This sequence belongs to the complex I 23 kDa subunit family. As to quaternary structure, NDH-1 is composed of 13 different subunits. Subunits NuoA, H, J, K, L, M, N constitute the membrane sector of the complex. [4Fe-4S] cluster is required as a cofactor.

It is found in the cell inner membrane. It carries out the reaction a quinone + NADH + 5 H(+)(in) = a quinol + NAD(+) + 4 H(+)(out). NDH-1 shuttles electrons from NADH, via FMN and iron-sulfur (Fe-S) centers, to quinones in the respiratory chain. The immediate electron acceptor for the enzyme in this species is believed to be ubiquinone. Couples the redox reaction to proton translocation (for every two electrons transferred, four hydrogen ions are translocated across the cytoplasmic membrane), and thus conserves the redox energy in a proton gradient. The polypeptide is NADH-quinone oxidoreductase subunit I (Yersinia pseudotuberculosis serotype O:1b (strain IP 31758)).